Consider the following 505-residue polypeptide: Maturase K (505 aa).

This sequence belongs to the intron maturase 2 family. MatK subfamily.

The protein localises to the plastid. It localises to the chloroplast. Usually encoded in the trnK tRNA gene intron. Probably assists in splicing its own and other chloroplast group II introns. This is Maturase K from Barclaya longifolia (Orchid lily).